The chain runs to 652 residues: DNA ligase (652 aa).

NAD(+) is bound by residues 29–33 (DAEYD), 78–79 (SL), and Glu107. Residue Lys109 is the N6-AMP-lysine intermediate of the active site. The NAD(+) site is built by Arg130, Glu164, Lys278, and Lys302. Zn(2+) contacts are provided by Cys395, Cys398, Cys413, and Cys418. The BRCT domain occupies 577–652 (DENAALSGMT…IKDEAWLESL (76 aa)).

Belongs to the NAD-dependent DNA ligase family. LigA subfamily. Mg(2+) is required as a cofactor. Mn(2+) serves as cofactor.

It catalyses the reaction NAD(+) + (deoxyribonucleotide)n-3'-hydroxyl + 5'-phospho-(deoxyribonucleotide)m = (deoxyribonucleotide)n+m + AMP + beta-nicotinamide D-nucleotide.. Functionally, DNA ligase that catalyzes the formation of phosphodiester linkages between 5'-phosphoryl and 3'-hydroxyl groups in double-stranded DNA using NAD as a coenzyme and as the energy source for the reaction. It is essential for DNA replication and repair of damaged DNA. The sequence is that of DNA ligase from Streptococcus suis (strain 98HAH33).